Consider the following 361-residue polypeptide: RNA-binding protein 4 (361 aa).

2 consecutive RRM domains span residues 2–72 (VKLF…ASKN) and 78–148 (TKLH…LSTS). A Glycyl lysine isopeptide (Lys-Gly) (interchain with G-Cter in SUMO2) cross-link involves residue Lys-79. Ser-86 bears the Phosphoserine mark. Residues 160 to 177 (SGCYRCGKEGHWSKECPI) form a CCHC-type zinc finger. Positions 196–361 (AVRTPYTMSY…YADRARYSAF (166 aa)) are interaction with TNPO3. At Ser-306 the chain carries Phosphoserine.

Interacts with TNPO3; the interaction mediates nuclear import of the protein and is disrupted by nuclear Ran bound to GTP. Interacts with EIF4G1 and WT1. Interacts with EIF4A1; the interaction is modulated under stress-induced conditions. Interacts with AGO1. Interacts with AGO2; the interaction occurs under both cell proliferation and differentiation conditions and in an RNA- and phosphorylation-independent manner. Interacts with DDX5; the interaction occurs in an RNA-independent manner. Interacts with RBPMS; the interaction allows cooperative assembly of RNA-bound stable cell-specific alternative splicing regulatory complexes. Post-translationally, phosphorylated. Phosphorylated in vitro on Ser-306 by SRPK1. Phosphorylation on Ser-306 is induced upon cell stress signaling, which alters its subcellular localization and may modulate its activity on IRES-mediated mRNA translation. Phosphorylated. Phosphorylation on Ser-306 is induced upon cell muscle differentiation. Expressed in the suprachiasmatic nucleus (SCN). Expressed in myocytes; expression gradually increases during muscle cell differentiation (at protein level). Expressed in the suprachiasmatic nucleus (SCN).

It is found in the nucleus. It localises to the nucleolus. Its subcellular location is the nucleus speckle. The protein localises to the cytoplasm. The protein resides in the cytoplasmic granule. Its function is as follows. RNA-binding factor involved in multiple aspects of cellular processes like alternative splicing of pre-mRNA and translation regulation. Modulates alternative 5'-splice site and exon selection. Acts as a muscle cell differentiation-promoting factor. Activates exon skipping of the PTB pre-mRNA during muscle cell differentiation. Antagonizes the activity of the splicing factor PTBP1 to modulate muscle cell-specific exon selection of alpha tropomyosin. Binds to intronic pyrimidine-rich sequence of the TPM1 and MAPT pre-mRNAs. Required for the translational activation of PER1 mRNA in response to circadian clock. Binds directly to the 3'-UTR of the PER1 mRNA. Exerts a suppressive activity on Cap-dependent translation via binding to CU-rich responsive elements within the 3'UTR of mRNAs, a process increased under stress conditions or during myocytes differentiation. Recruits EIF4A1 to stimulate IRES-dependent translation initiation in respons to cellular stress. Associates to internal ribosome entry segment (IRES) in target mRNA species under stress conditions. Plays a role for miRNA-guided RNA cleavage and translation suppression by promoting association of AGO2-containing miRNPs with their cognate target mRNAs. Associates with miRNAs during muscle cell differentiation. Binds preferentially to 5'-CGCGCG[GCA]-3' motif in vitro. The chain is RNA-binding protein 4 (Rbm4) from Mus musculus (Mouse).